The sequence spans 380 residues: NADPH oxidoreductase (380 aa).

Residues 58–164 (ARELRGRILG…AAPQGNFVLP (107 aa)) form the FAD-binding FR-type domain. The 82-residue stretch at 299-380 (GTVTFARSGK…AASGDCVLDI (82 aa)) folds into the 2Fe-2S ferredoxin-type domain. [2Fe-2S] cluster-binding residues include C333, C338, C341, and C368.

In terms of assembly, interacts with DesA3 to form a functional acyl-CoA desaturase complex. The cofactor is [2Fe-2S] cluster. Requires FAD as cofactor.

It is found in the cell membrane. The protein operates within lipid metabolism; fatty acid metabolism. Functionally, is likely involved in the aerobic desaturation system responsible for the synthesis of oleic acid from stearoyl-CoA; oleic acid is a precursor of mycobacterial membrane phospholipids and triglycerides. Is the electron transfer partner for the stearoyl-CoA 9-desaturase DesA3. Catalyzes electron transfer reaction between NADPH and the diiron center of DesA3. Cannot use NADH. The sequence is that of NADPH oxidoreductase from Mycobacterium tuberculosis (strain ATCC 25618 / H37Rv).